A 634-amino-acid chain; its full sequence is CRISPR-associated protein MJ1674 (634 aa).

CRISPR (clustered regularly interspaced short palindromic repeat) is an adaptive immune system that provides protection against mobile genetic elements (viruses, transposable elements and conjugative plasmids). CRISPR clusters contain spacers, sequences complementary to antecedent mobile elements, and target invading nucleic acids. CRISPR clusters are transcribed and processed into CRISPR RNA (crRNA). The type III Csm effector complex binds crRNA and acts as a crRNA-guided RNase, DNase and cyclic oligoadenylate synthase; binding of target RNA cognate to the crRNA is required for all activities. The chain is CRISPR-associated protein MJ1674 from Methanocaldococcus jannaschii (strain ATCC 43067 / DSM 2661 / JAL-1 / JCM 10045 / NBRC 100440) (Methanococcus jannaschii).